A 236-amino-acid chain; its full sequence is 2,3,4,5-tetrahydropyridine-2,6-dicarboxylate N-acetyltransferase (236 aa).

Belongs to the transferase hexapeptide repeat family. DapH subfamily.

It catalyses the reaction (S)-2,3,4,5-tetrahydrodipicolinate + acetyl-CoA + H2O = L-2-acetamido-6-oxoheptanedioate + CoA. It functions in the pathway amino-acid biosynthesis; L-lysine biosynthesis via DAP pathway; LL-2,6-diaminopimelate from (S)-tetrahydrodipicolinate (acetylase route): step 1/3. In terms of biological role, catalyzes the transfer of an acetyl group from acetyl-CoA to tetrahydrodipicolinate. This is 2,3,4,5-tetrahydropyridine-2,6-dicarboxylate N-acetyltransferase from Clostridium botulinum (strain ATCC 19397 / Type A).